Consider the following 858-residue polypeptide: Bifunctional uridylyltransferase/uridylyl-removing enzyme (858 aa).

A uridylyltransferase region spans residues Met-1–Leu-324. The segment at Ser-325 to Leu-681 is uridylyl-removing. Positions Val-443 to Leu-565 constitute an HD domain. 2 ACT domains span residues Gln-682–Ser-761 and Ile-790–Val-858.

It belongs to the GlnD family. Mg(2+) is required as a cofactor.

It carries out the reaction [protein-PII]-L-tyrosine + UTP = [protein-PII]-uridylyl-L-tyrosine + diphosphate. The enzyme catalyses [protein-PII]-uridylyl-L-tyrosine + H2O = [protein-PII]-L-tyrosine + UMP + H(+). With respect to regulation, uridylyltransferase (UTase) activity is inhibited by glutamine, while glutamine activates uridylyl-removing (UR) activity. Functionally, modifies, by uridylylation and deuridylylation, the PII regulatory proteins (GlnB and homologs), in response to the nitrogen status of the cell that GlnD senses through the glutamine level. Under low glutamine levels, catalyzes the conversion of the PII proteins and UTP to PII-UMP and PPi, while under higher glutamine levels, GlnD hydrolyzes PII-UMP to PII and UMP (deuridylylation). Thus, controls uridylylation state and activity of the PII proteins, and plays an important role in the regulation of nitrogen assimilation and metabolism. The sequence is that of Bifunctional uridylyltransferase/uridylyl-removing enzyme from Burkholderia thailandensis (strain ATCC 700388 / DSM 13276 / CCUG 48851 / CIP 106301 / E264).